A 535-amino-acid polypeptide reads, in one-letter code: Sucrose transport protein SUT5 (535 aa).

Topologically, residues 1–53 (MEEGRRGDREAKSAAGWTALSTTKTTLEEKRRLQANGSVGGDAGTSGFRRIVR) are cytoplasmic. Residues 54–74 (LFFACMVAGGIQYGWALQLSL) traverse the membrane as a helical segment. Over 75–87 (LSPYSQTLGISHS) the chain is Extracellular. Residues 88 to 108 (YVSLTWICGPIAGFVVQPIVG) traverse the membrane as a helical segment. The Cytoplasmic portion of the chain corresponds to 109-122 (YYSDRCTMKMGRRR). A helical membrane pass occupies residues 123–143 (PFILVGCLIICISVMIIGFSA). Residues 144 to 163 (DIGRHLGDTKEHCSTYTGPR) are Extracellular-facing. Residues 164-184 (WSAAMVYIVGFWFLDFANNTV) traverse the membrane as a helical segment. Topologically, residues 185–203 (QGPARAMMADLSAGHHGPN) are cytoplasmic. A helical membrane pass occupies residues 204 to 224 (VGQSIFSLWMAIGSVLGYLSG). The Extracellular segment spans residues 225-249 (ANGKWHEWFPWLKTAACCDACANLK). Residues 250 to 270 (GAFFTAVLLIVVSMTVTMYLA) traverse the membrane as a helical segment. Over 271 to 302 (DEMPLDKQDVDTSGGGGCAVFVDLFKSLRNLP) the chain is Cytoplasmic. Residues 303–323 (PAMFKVLAVTAVTWLSWFPFI) form a helical membrane-spanning segment. The Extracellular portion of the chain corresponds to 324–354 (QYNTDWMGREIYHGEPQGTAAKADVYDAGVR). A helical membrane pass occupies residues 355–375 (EGAMGLLFCSVALGVTSFVIP). At 376–384 (KLCRRLTSK) the chain is on the cytoplasmic side. Residues 385-405 (VVWSISNFLVFALMAVMVAVG) form a helical membrane-spanning segment. Topologically, residues 406-429 (MVSMRGYRPSLAAGLTGPDPTLKA) are extracellular. The helical transmembrane segment at 430–450 (VALVVFALIGIPQAVLFSVPW) threads the bilayer. The Cytoplasmic segment spans residues 451–465 (AVASEVTAEEGGGQG). The chain crosses the membrane as a helical span at residues 466 to 486 (LAIGVLNIAIVVPQLVIALTA). The Extracellular portion of the chain corresponds to 487–498 (GPIDGAFNKGNT). The helical transmembrane segment at 499–519 (PAFGIGGAFAFICGVLALIWL) threads the bilayer. Over 520 to 535 (PKTRGVSNAAVVAGGH) the chain is Cytoplasmic.

The protein belongs to the glycoside-pentoside-hexuronide (GPH) cation symporter transporter (TC 2.A.2.4) family. As to quaternary structure, homodimer.

It localises to the cell membrane. Its pathway is glycan biosynthesis; sucrose metabolism. Responsible for the transport of sucrose into the cell, with the concomitant uptake of protons (symport system). May also transport other glucosides. This is Sucrose transport protein SUT5 (SUT5) from Oryza sativa subsp. indica (Rice).